The primary structure comprises 202 residues: Venom allergen 5.02 (202 aa).

Cystine bridges form between C4/C16, C8/C101, C26/C94, and C168/C185. In terms of domain architecture, SCP spans 46-187; it reads KQHNEFRQKV…WHRHYLVCNY (142 aa).

It belongs to the CRISP family. Venom allergen 5-like subfamily. Expressed by the venom gland.

The protein resides in the secreted. The polypeptide is Venom allergen 5.02 (Vespa crabro (European hornet)).